The primary structure comprises 224 residues: dTTP/UTP pyrophosphatase (224 aa).

D77 serves as the catalytic Proton acceptor.

This sequence belongs to the Maf family. YhdE subfamily. Requires a divalent metal cation as cofactor.

It is found in the cytoplasm. It catalyses the reaction dTTP + H2O = dTMP + diphosphate + H(+). The catalysed reaction is UTP + H2O = UMP + diphosphate + H(+). Its function is as follows. Nucleoside triphosphate pyrophosphatase that hydrolyzes dTTP and UTP. May have a dual role in cell division arrest and in preventing the incorporation of modified nucleotides into cellular nucleic acids. In Dehalococcoides mccartyi (strain ATCC BAA-2266 / KCTC 15142 / 195) (Dehalococcoides ethenogenes (strain 195)), this protein is dTTP/UTP pyrophosphatase.